Consider the following 151-residue polypeptide: Large ribosomal subunit protein eL8 (151 aa).

Belongs to the eukaryotic ribosomal protein eL8 family. As to quaternary structure, part of the 50S ribosomal subunit. Probably part of the RNase P complex.

The protein localises to the cytoplasm. Its function is as follows. Multifunctional RNA-binding protein that recognizes the K-turn motif in ribosomal RNA, the RNA component of RNase P, box H/ACA, box C/D and box C'/D' sRNAs. This chain is Large ribosomal subunit protein eL8, found in Pyrobaculum neutrophilum (strain DSM 2338 / JCM 9278 / NBRC 100436 / V24Sta) (Thermoproteus neutrophilus).